We begin with the raw amino-acid sequence, 424 residues long: Adenylosuccinate synthetase 1 (424 aa).

Residues Gly12–Lys18 and Gly40–Thr42 contribute to the GTP site. The active-site Proton acceptor is the Asp13. Mg(2+)-binding residues include Asp13 and Gly40. IMP is bound by residues Asp13–Lys16, Asn38–His41, Thr127, Arg141, Thr236, and Arg304. The Proton donor role is filled by His41. Substrate is bound at residue Ala300–Arg306. GTP contacts are provided by residues Arg306, Lys332–Asp334, and Gly413–Gly415.

This sequence belongs to the adenylosuccinate synthetase family. As to quaternary structure, homodimer. The cofactor is Mg(2+).

Its subcellular location is the cytoplasm. The catalysed reaction is IMP + L-aspartate + GTP = N(6)-(1,2-dicarboxyethyl)-AMP + GDP + phosphate + 2 H(+). The protein operates within purine metabolism; AMP biosynthesis via de novo pathway; AMP from IMP: step 1/2. Plays an important role in the de novo pathway of purine nucleotide biosynthesis. Catalyzes the first committed step in the biosynthesis of AMP from IMP. In Methanosarcina acetivorans (strain ATCC 35395 / DSM 2834 / JCM 12185 / C2A), this protein is Adenylosuccinate synthetase 1.